Consider the following 790-residue polypeptide: Lon protease (790 aa).

Residues 13–209 (LPLFPIRNTV…RLTDHVAKEI (197 aa)) enclose the Lon N-terminal domain. 362–369 (GPPGVGKT) contacts ATP. The Lon proteolytic domain occupies 598–779 (DNQVGITIGL…DQVLDIALAT (182 aa)). Residues Ser-685 and Lys-728 contribute to the active site.

The protein belongs to the peptidase S16 family. Homohexamer. Organized in a ring with a central cavity.

Its subcellular location is the cytoplasm. The catalysed reaction is Hydrolysis of proteins in presence of ATP.. ATP-dependent serine protease that mediates the selective degradation of mutant and abnormal proteins as well as certain short-lived regulatory proteins. Required for cellular homeostasis and for survival from DNA damage and developmental changes induced by stress. Degrades polypeptides processively to yield small peptide fragments that are 5 to 10 amino acids long. Binds to DNA in a double-stranded, site-specific manner. This chain is Lon protease, found in Orientia tsutsugamushi (strain Ikeda) (Rickettsia tsutsugamushi).